The chain runs to 144 residues: Large ribosomal subunit protein uL15 (144 aa).

The segment at 1 to 48 (MQLNNLKPAAGSKHAKRRVGRGIGSGLGKTAGRGHKGQKSRSGGFHKV) is disordered. Residues 21 to 31 (RGIGSGLGKTA) show a composition bias toward gly residues.

It belongs to the universal ribosomal protein uL15 family. Part of the 50S ribosomal subunit.

Functionally, binds to the 23S rRNA. This is Large ribosomal subunit protein uL15 from Cupriavidus taiwanensis (strain DSM 17343 / BCRC 17206 / CCUG 44338 / CIP 107171 / LMG 19424 / R1) (Ralstonia taiwanensis (strain LMG 19424)).